A 506-amino-acid chain; its full sequence is Deoxyguanosinetriphosphate triphosphohydrolase (506 aa).

The 209-residue stretch at 66–274 (RLTHSLEVQQ…MEAADDISYC (209 aa)) folds into the HD domain.

The protein belongs to the dGTPase family. Type 1 subfamily. As to quaternary structure, homotetramer. Mg(2+) is required as a cofactor.

It carries out the reaction dGTP + H2O = 2'-deoxyguanosine + triphosphate + H(+). Its function is as follows. dGTPase preferentially hydrolyzes dGTP over the other canonical NTPs. This is Deoxyguanosinetriphosphate triphosphohydrolase from Yersinia pestis bv. Antiqua (strain Antiqua).